A 351-amino-acid chain; its full sequence is Putative F-box protein At4g09790 (351 aa).

An F-box domain is found at 1 to 51 (MTTICDLPRDLVARILSRVPLTSMRRVRFTCKRWNTISKDPSFAKTHFGKA).

This is Putative F-box protein At4g09790 from Arabidopsis thaliana (Mouse-ear cress).